The chain runs to 370 residues: MSSCKDSLSLMAMWGSIARFDPKHERSFEGPEKRLEVIMRVVDGTHVSGLLAHDDDVWQKVIDAICAHIVSREFNEYIRSYVLSESSLFVMKDRVILITCGTITLLNCVPLICEAVSTVCGEVEWVSFMHKNYSFPWEQKGPHLSMAEEFKTLRSHFPSGQPFIFGPIDSDHYFLYFHSDVVQPSCSDDAQLSMTMYGLDRNQTKHWYSDKMLPTGPETAVIREATGLSEVVDDSWILHDLQYEPCGYSINAIRGSEYQTIHITPEEHCSFASYETNTCALNYSKCICGVLRVFDPERFSVIVFIDPDSAVGKSYHSGGTIGVEPEYYPNYEAHHRTVNEYTPGHWVLKVNYVKRAVGTVGTSAASGAKE.

Phenylalanine 28 is a substrate binding site. Catalysis depends on residues glutamate 29 and glutamate 32. Substrate is bound at residue glutamate 85. Serine 86 acts as the Schiff-base intermediate with substrate; via pyruvic acid in catalysis. A Pyruvic acid (Ser); by autocatalysis modification is found at serine 86. Cysteine 100 serves as the catalytic Proton donor; for catalytic activity. Catalysis depends on proton acceptor; for processing activity residues serine 249 and histidine 262. Residue glutamate 266 participates in substrate binding.

It belongs to the eukaryotic AdoMetDC family. Forms a heterodimer with catalytically inactive AdoMetDC prozyme; heterodimerization is required to activate AdoMetDC. It depends on pyruvate as a cofactor. Post-translationally, is synthesized initially as an inactive proenzyme. Formation of the active enzyme involves a self-maturation process in which the active site pyruvoyl group is generated from an internal serine residue via an autocatalytic post-translational modification. Two non-identical subunits are generated from the proenzyme in this reaction, and the pyruvate is formed at the N-terminus of the alpha chain, which is derived from the carboxyl end of the proenzyme. The post-translation cleavage follows an unusual pathway, termed non-hydrolytic serinolysis, in which the side chain hydroxyl group of the serine supplies its oxygen atom to form the C-terminus of the beta chain, while the remainder of the serine residue undergoes an oxidative deamination to produce ammonia and the pyruvoyl group blocking the N-terminus of the alpha chain.

It catalyses the reaction S-adenosyl-L-methionine + H(+) = S-adenosyl 3-(methylsulfanyl)propylamine + CO2. The protein operates within amine and polyamine biosynthesis; S-adenosylmethioninamine biosynthesis; S-adenosylmethioninamine from S-adenosyl-L-methionine: step 1/1. With respect to regulation, allosterically activated by AdoMetDC prozyme. Activated by putrescine and to a lesser extent by spermidine, norspermidine and spermine. Inhibited by 5'-([(Z)-4-amino-2-butenyl]methylamino)-5'-deoxyadenosine (MDL 73811). In terms of biological role, in association with the catalytically inactive AdoMetDC prozyme, catalyzes the decarboxylation of S-adenosyl-L-methionine which is essential for the biosynthesis of the polyamine spermidine. Required for growth and survival during the bloodstream life cycle stage. The sequence is that of S-adenosylmethionine decarboxylase proenzyme from Trypanosoma brucei brucei.